Here is a 118-residue protein sequence, read N- to C-terminus: Small ribosomal subunit protein uS13 (118 aa).

The disordered stretch occupies residues 94–118; sequence GLPLRGQRTRTNARTRKGPRKAIRK.

It belongs to the universal ribosomal protein uS13 family. As to quaternary structure, part of the 30S ribosomal subunit. Forms a loose heterodimer with protein S19. Forms two bridges to the 50S subunit in the 70S ribosome.

Functionally, located at the top of the head of the 30S subunit, it contacts several helices of the 16S rRNA. In the 70S ribosome it contacts the 23S rRNA (bridge B1a) and protein L5 of the 50S subunit (bridge B1b), connecting the 2 subunits; these bridges are implicated in subunit movement. Contacts the tRNAs in the A and P-sites. The sequence is that of Small ribosomal subunit protein uS13 from Xanthomonas axonopodis pv. citri (strain 306).